The primary structure comprises 238 residues: Endothelin-3 (238 aa).

The first 16 residues, 1-16 (MEPGLWLLFGLTVTSA), serve as a signal peptide directing secretion. The propeptide occupies 17-94 (AGFVPCSQSG…AEGAPEHHRS (78 aa)). Residues 24–89 (QSGDAGRRGV…GQEQAAEGAP (66 aa)) form a disordered region. Intrachain disulfides connect cysteine 97–cysteine 111 and cysteine 99–cysteine 107. The propeptide occupies 118 to 238 (INTPEQTVPY…PRCLFQEGAP (121 aa)). The segment at 159 to 173 (CACVGRYDKACLHFC) is endothelin-like. Residues 183–219 (SRTAEKTDKEEEGKVEVKDQQSKQALDLHHPKLMPGS) are disordered. Residues 185 to 212 (TAEKTDKEEEGKVEVKDQQSKQALDLHH) show a composition bias toward basic and acidic residues.

The protein belongs to the endothelin/sarafotoxin family. In terms of tissue distribution, expressed in trophoblasts and placental stem villi vessels, but not in cultured placental smooth muscle cells.

The protein resides in the secreted. Its function is as follows. Endothelins are endothelium-derived vasoconstrictor peptides. This Homo sapiens (Human) protein is Endothelin-3 (EDN3).